The following is a 463-amino-acid chain: Bifunctional protein HldE (463 aa).

The ribokinase stretch occupies residues 1–315 (MKKILVIGDL…LILNQTHPKI (315 aa)). An ATP-binding site is contributed by 191–194 (NRAE). Residue D260 is part of the active site. The segment at 334 to 463 (FTNGCFDLLH…IEKIKRTHND (130 aa)) is cytidylyltransferase.

It in the N-terminal section; belongs to the carbohydrate kinase PfkB family. In the C-terminal section; belongs to the cytidylyltransferase family. As to quaternary structure, homodimer.

The catalysed reaction is D-glycero-beta-D-manno-heptose 7-phosphate + ATP = D-glycero-beta-D-manno-heptose 1,7-bisphosphate + ADP + H(+). It carries out the reaction D-glycero-beta-D-manno-heptose 1-phosphate + ATP + H(+) = ADP-D-glycero-beta-D-manno-heptose + diphosphate. It functions in the pathway nucleotide-sugar biosynthesis; ADP-L-glycero-beta-D-manno-heptose biosynthesis; ADP-L-glycero-beta-D-manno-heptose from D-glycero-beta-D-manno-heptose 7-phosphate: step 1/4. The protein operates within nucleotide-sugar biosynthesis; ADP-L-glycero-beta-D-manno-heptose biosynthesis; ADP-L-glycero-beta-D-manno-heptose from D-glycero-beta-D-manno-heptose 7-phosphate: step 3/4. Catalyzes the phosphorylation of D-glycero-D-manno-heptose 7-phosphate at the C-1 position to selectively form D-glycero-beta-D-manno-heptose-1,7-bisphosphate. In terms of biological role, catalyzes the ADP transfer from ATP to D-glycero-beta-D-manno-heptose 1-phosphate, yielding ADP-D-glycero-beta-D-manno-heptose. The protein is Bifunctional protein HldE of Helicobacter pylori (strain HPAG1).